Consider the following 209-residue polypeptide: Large ribosomal subunit protein uL3 (209 aa).

Gln-150 carries the post-translational modification N5-methylglutamine.

This sequence belongs to the universal ribosomal protein uL3 family. In terms of assembly, part of the 50S ribosomal subunit. Forms a cluster with proteins L14 and L19. Post-translationally, methylated by PrmB.

Functionally, one of the primary rRNA binding proteins, it binds directly near the 3'-end of the 23S rRNA, where it nucleates assembly of the 50S subunit. This is Large ribosomal subunit protein uL3 from Proteus mirabilis (strain HI4320).